The chain runs to 533 residues: Probable intron-encoded endonuclease 3 (533 aa).

Helical transmembrane passes span 1-21, 30-50, and 81-101; these read MYLS…FFGR, LITC…FFEV, and LTVA…IYSI. The ndh-5 exon 1 encoded stretch occupies residues 1-108; it reads MYLSIIILPL…YSISYMSHDP (108 aa). Residues 109–533 form a ndh-5 intron 1 encoded region; it reads RGRVRGKRVY…SISLLLGRRR (425 aa).

It in the N-terminal section; belongs to the complex I subunit 5 family. In the C-terminal section; belongs to the LAGLIDADG endonuclease family.

The protein resides in the mitochondrion membrane. In terms of biological role, mitochondrial DNA endonuclease involved in intron homing. The protein is Probable intron-encoded endonuclease 3 of Neurospora crassa (strain ATCC 24698 / 74-OR23-1A / CBS 708.71 / DSM 1257 / FGSC 987).